The primary structure comprises 222 residues: MLWALFFLVTTIHAELCRPDAENAFKVRLSIKAALGDKAYVWDTDEEYLFRAMVAFSMRKVPNREGTEISHVLLCNVTQRVSFWFVVTDPLKNHTLPAAEVQSAIRMNRNRINSAFFLDDHTLEFLKIPSTLAPPMDPSVPVWIIVFGVIFCIVTVAIALLVLSGIRQRRRNKKGPPGVEDAEDKCENIITIENGIPCDPLDMKGGHINDGFLTEDERLTPL.

Residues 1 to 14 (MLWALFFLVTTIHA) form the signal peptide. The Extracellular segment spans residues 15 to 141 (ELCRPDAENA…LAPPMDPSVP (127 aa)). Positions 21 to 222 (AENAFKVRLS…LTEDERLTPL (202 aa)) constitute a Collectrin-like domain. Residues Asn-76 and Asn-93 are each glycosylated (N-linked (GlcNAc...) asparagine). Residues 142–162 (VWIIVFGVIFCIVTVAIALLV) traverse the membrane as a helical segment. At 163-222 (LSGIRQRRRNKKGPPGVEDAEDKCENIITIENGIPCDPLDMKGGHINDGFLTEDERLTPL) the chain is on the cytoplasmic side. Phosphothreonine is present on residues Thr-214 and Thr-220.

It belongs to the CLTRN family. Monomer. Homodimer; dimerization prevents CLTRN cleavage by BACE2. Interacts with SLC6A18; this interaction regulates the trafficking of SLC6A18 to the cell membrane and its amino acid transporter activity. Interacts with SLC6A19; this interaction regulates the trafficking of SLC6A19 to the cell membrane and its amino acid transporter activity. Interacts with SNAPIN. In terms of processing, glycosylated. Glycosylation is required for plasma membrane localization and for its cleavage by BACE2. Post-translationally, proteolytically processed in pancreatic beta cells by BACE2 leading to the generation and extracellular release of soluble CLTRN, and a corresponding cell-associated C-terminal fragment which is later cleaved by gamma-secretase. This shedding process inactivates CLTRN. Three cleavage sites have been identified for BACE2, two clustered sites after Phe-116 and Leu-118 and a more membrane proximal site at Phe-125; the preferred BACE2 cleavage site seems to be between Phe-125 and Leu-126, Phe-116 and Leu-118 act as alternative sites. Kidney; collecting ducts. Pancreas; beta cells of islets.

Its subcellular location is the cell membrane. Plays an important role in amino acid transport by acting as binding partner of amino acid transporters SLC6A18 and SLC6A19, regulating their trafficking on the cell surface and their activity. May also play a role in trafficking of amino acid transporters SLC3A1 and SLC7A9 to the renal cortical cell membrane. Regulator of SNARE complex function. Stimulator of beta cell replication. This is Collectrin from Rattus norvegicus (Rat).